The sequence spans 163 residues: Cyanate hydratase (163 aa).

Residues arginine 103, glutamate 106, and serine 129 contribute to the active site.

Belongs to the cyanase family.

It carries out the reaction cyanate + hydrogencarbonate + 3 H(+) = NH4(+) + 2 CO2. In terms of biological role, catalyzes the reaction of cyanate with bicarbonate to produce ammonia and carbon dioxide. This chain is Cyanate hydratase, found in Paracoccidioides lutzii (strain ATCC MYA-826 / Pb01) (Paracoccidioides brasiliensis).